The chain runs to 140 residues: Nucleoside diphosphate kinase (140 aa).

K11, F59, R87, T93, R104, and N114 together coordinate ATP. The Pros-phosphohistidine intermediate role is filled by H117.

The protein belongs to the NDK family. As to quaternary structure, homotetramer. Requires Mg(2+) as cofactor.

The protein localises to the cytoplasm. It carries out the reaction a 2'-deoxyribonucleoside 5'-diphosphate + ATP = a 2'-deoxyribonucleoside 5'-triphosphate + ADP. The catalysed reaction is a ribonucleoside 5'-diphosphate + ATP = a ribonucleoside 5'-triphosphate + ADP. Major role in the synthesis of nucleoside triphosphates other than ATP. The ATP gamma phosphate is transferred to the NDP beta phosphate via a ping-pong mechanism, using a phosphorylated active-site intermediate. This is Nucleoside diphosphate kinase from Sphingopyxis alaskensis (strain DSM 13593 / LMG 18877 / RB2256) (Sphingomonas alaskensis).